We begin with the raw amino-acid sequence, 458 residues long: ATP synthase subunit beta (458 aa).

Residue 148–155 (GGAGVGKT) coordinates ATP.

The protein belongs to the ATPase alpha/beta chains family. In terms of assembly, F-type ATPases have 2 components, CF(1) - the catalytic core - and CF(0) - the membrane proton channel. CF(1) has five subunits: alpha(3), beta(3), gamma(1), delta(1), epsilon(1). CF(0) has three main subunits: a(1), b(2) and c(9-12). The alpha and beta chains form an alternating ring which encloses part of the gamma chain. CF(1) is attached to CF(0) by a central stalk formed by the gamma and epsilon chains, while a peripheral stalk is formed by the delta and b chains.

It localises to the cell inner membrane. It catalyses the reaction ATP + H2O + 4 H(+)(in) = ADP + phosphate + 5 H(+)(out). Its function is as follows. Produces ATP from ADP in the presence of a proton gradient across the membrane. The catalytic sites are hosted primarily by the beta subunits. In Francisella philomiragia subsp. philomiragia (strain ATCC 25017 / CCUG 19701 / FSC 153 / O#319-036), this protein is ATP synthase subunit beta.